The chain runs to 284 residues: Pantothenate synthetase (284 aa).

An ATP-binding site is contributed by 32-39 (MGALHDGH). The Proton donor role is filled by His39. Residue Gln63 coordinates (R)-pantoate. Gln63 provides a ligand contact to beta-alanine. 149–152 (GEKD) serves as a coordination point for ATP. Gln155 lines the (R)-pantoate pocket. ATP contacts are provided by residues Ile178 and 186–189 (MSSR).

Belongs to the pantothenate synthetase family. In terms of assembly, homodimer.

The protein localises to the cytoplasm. The enzyme catalyses (R)-pantoate + beta-alanine + ATP = (R)-pantothenate + AMP + diphosphate + H(+). It participates in cofactor biosynthesis; (R)-pantothenate biosynthesis; (R)-pantothenate from (R)-pantoate and beta-alanine: step 1/1. Catalyzes the condensation of pantoate with beta-alanine in an ATP-dependent reaction via a pantoyl-adenylate intermediate. In Roseobacter denitrificans (strain ATCC 33942 / OCh 114) (Erythrobacter sp. (strain OCh 114)), this protein is Pantothenate synthetase.